The primary structure comprises 259 residues: Enkurin (259 aa).

Disordered regions lie at residues 1 to 26 (MVAM…EPPQ) and 76 to 98 (PPKK…TDHP). Positions 76 to 88 (PPKKKFEWNERRK) are enriched in basic and acidic residues. The SH3-binding motif lies at 86 to 92 (RRKPPVP). An Enkurin domain is found at 163 to 255 (KRNEEVKKAQ…VLEKHKVIYI (93 aa)). Residues 163-258 (KRNEEVKKAQ…KHKVIYIANK (96 aa)) form an interaction with TRPC proteins region. Residues 179-190 (IQENLRKAAMKR) enclose the IQ domain.

As to quaternary structure, microtubule inner protein component of sperm flagellar doublet microtubules. Binds calmodulin via its IQ domain. Interacts with TRPC1, TRPC2, TRPC5, but not TRPC3. Interacts with CFAP45. In terms of tissue distribution, expressed in trachea multiciliated cells.

The protein resides in the cytoplasm. It is found in the cytoskeleton. The protein localises to the flagellum axoneme. Its subcellular location is the cilium axoneme. In terms of biological role, adapter that functions to localize a calcium-sensitive signal transduction machinery in sperm to a calcium-permeable ion channel. Microtubule inner protein (MIP) part of the dynein-decorated doublet microtubules (DMTs) in cilia axoneme, which is required for motile cilia beating. This is Enkurin (ENKUR) from Bos taurus (Bovine).